Here is a 230-residue protein sequence, read N- to C-terminus: Uracil-DNA glycosylase (230 aa).

The active-site Proton acceptor is the D70.

Belongs to the uracil-DNA glycosylase (UDG) superfamily. UNG family.

It localises to the cytoplasm. It catalyses the reaction Hydrolyzes single-stranded DNA or mismatched double-stranded DNA and polynucleotides, releasing free uracil.. Its function is as follows. Excises uracil residues from the DNA which can arise as a result of misincorporation of dUMP residues by DNA polymerase or due to deamination of cytosine. The sequence is that of Uracil-DNA glycosylase from Pseudomonas syringae pv. tomato (strain ATCC BAA-871 / DC3000).